The chain runs to 301 residues: Cuticle collagen 1 (301 aa).

Residues 1 to 37 form the signal peptide; it reads METDGRLKAYKFVAYAAVGFSIAAVASVLLTLPMVYS. The interval 79–82 is furin-like endopeptidase recognition region; the sequence is RTTR. Triple-helical region stretches follow at residues 105–134, 153–179, 183–209, and 218–283; these read GPPG…PGKP, GPPG…PGTD, GSPG…PGTP, and GAPG…KGIC. The disordered stretch occupies residues 109–284; that stretch reads PAGAPGKPGK…GTPGEKGICP (176 aa). Composition is skewed to pro residues over residues 131–164 and 184–193; these read PGKP…PGAP and SPGPRGPPGP. Residues 194-210 are compositionally biased toward low complexity; that stretch reads AGEAGAPGPAGEPGTPA. Residues 226 to 258 show a composition bias toward pro residues; the sequence is SGPPGPPGPPGAPGNDGPPGPPGPKGAPGPDGP.

Belongs to the cuticular collagen family. In terms of assembly, collagen polypeptide chains are complexed within the cuticle by disulfide bonds and other types of covalent cross-links.

It is found in the secreted. The protein resides in the extracellular space. Functionally, secreted collagen that forms part of the nematode cuticle, which functions as an exoskeleton and a barrier to protect the worm from its environment. Secretion and subsequent incorporation into the cuticle is likely mediated by bli-4, which probably cleaves at the N-terminal consensus furin cleavage site. This chain is Cuticle collagen 1 (sqt-3), found in Caenorhabditis elegans.